The following is a 719-amino-acid chain: Polyribonucleotide nucleotidyltransferase (719 aa).

Mg(2+) contacts are provided by Asp495 and Asp501. Residues 562-621 form the KH domain; the sequence is PRRLSFRIDPELIGTVIGPGGRTIKGITERTNTKIDIEDTGIVTVASHDGAAAEEAQKII. Positions 631–699 constitute an S1 motif domain; that stretch reads GEYFDGKVTR…NRGRINLTLR (69 aa). Residues 699–719 are disordered; that stretch reads RGVPQDGSDPQPTVILPIGES.

Belongs to the polyribonucleotide nucleotidyltransferase family. Mg(2+) is required as a cofactor.

The protein localises to the cytoplasm. The enzyme catalyses RNA(n+1) + phosphate = RNA(n) + a ribonucleoside 5'-diphosphate. Involved in mRNA degradation. Catalyzes the phosphorolysis of single-stranded polyribonucleotides processively in the 3'- to 5'-direction. The protein is Polyribonucleotide nucleotidyltransferase of Synechococcus sp. (strain RCC307).